The chain runs to 228 residues: Urease accessory protein UreF (228 aa).

This sequence belongs to the UreF family. In terms of assembly, ureD, UreF and UreG form a complex that acts as a GTP-hydrolysis-dependent molecular chaperone, activating the urease apoprotein by helping to assemble the nickel containing metallocenter of UreC. The UreE protein probably delivers the nickel.

It is found in the cytoplasm. Functionally, required for maturation of urease via the functional incorporation of the urease nickel metallocenter. This chain is Urease accessory protein UreF, found in Blochmanniella pennsylvanica (strain BPEN).